A 351-amino-acid chain; its full sequence is Beta-hexosaminidase (351 aa).

Residues Asp-62, Arg-70, Arg-134, and 164-165 (KH) contribute to the substrate site. His-177 serves as the catalytic Proton donor/acceptor. The active-site Nucleophile is the Asp-249.

The protein belongs to the glycosyl hydrolase 3 family. NagZ subfamily.

The protein localises to the cytoplasm. The enzyme catalyses Hydrolysis of terminal non-reducing N-acetyl-D-hexosamine residues in N-acetyl-beta-D-hexosaminides.. It participates in cell wall biogenesis; peptidoglycan recycling. Functionally, plays a role in peptidoglycan recycling by cleaving the terminal beta-1,4-linked N-acetylglucosamine (GlcNAc) from peptide-linked peptidoglycan fragments, giving rise to free GlcNAc, anhydro-N-acetylmuramic acid and anhydro-N-acetylmuramic acid-linked peptides. This is Beta-hexosaminidase from Histophilus somni (strain 129Pt) (Haemophilus somnus).